The sequence spans 254 residues: MVPWLGPDDPFPPVERALGPATGAPGLLAASADLLPSRLIDAYLRGIFPWYSDGQPVLWWSPDPRMILVPDEFKVSPSLKKTLKRVLRDPAWEVRVDHDFRGVMRACAQAPRRGQRGTWITAEIIDAYSSLYRSGNAHSIETWHDGRRVGGLYGVAFGQMFFGESMYADVTDASKIALAALVAHLREHGLEMIDCQQNTSHLASLGGREIARKAFVAHVRRAVAEPPIPWQFDKRVLAALTGRTEPAAPSGIER.

Belongs to the L/F-transferase family.

The protein resides in the cytoplasm. It catalyses the reaction N-terminal L-lysyl-[protein] + L-leucyl-tRNA(Leu) = N-terminal L-leucyl-L-lysyl-[protein] + tRNA(Leu) + H(+). It carries out the reaction N-terminal L-arginyl-[protein] + L-leucyl-tRNA(Leu) = N-terminal L-leucyl-L-arginyl-[protein] + tRNA(Leu) + H(+). The catalysed reaction is L-phenylalanyl-tRNA(Phe) + an N-terminal L-alpha-aminoacyl-[protein] = an N-terminal L-phenylalanyl-L-alpha-aminoacyl-[protein] + tRNA(Phe). In terms of biological role, functions in the N-end rule pathway of protein degradation where it conjugates Leu, Phe and, less efficiently, Met from aminoacyl-tRNAs to the N-termini of proteins containing an N-terminal arginine or lysine. The sequence is that of Leucyl/phenylalanyl-tRNA--protein transferase from Burkholderia multivorans (strain ATCC 17616 / 249).